The sequence spans 456 residues: Nuclear distribution protein PAC1 (456 aa).

The region spanning 9–41 (QADELHKSIIAYLSANDLPNTAAALRAELNLTE) is the LisH domain. The stretch at 61-88 (TSIVRLQKKIMDLEARNAALQSELDNLT) forms a coiled coil. WD repeat units follow at residues 114 to 153 (SHRD…LEMT), 156 to 197 (GHTR…KNVR), 201 to 240 (GHDH…CVRS), 243 to 282 (GHTG…NPEN), 288 to 348 (GHEH…LMTL), 350 to 389 (GHDN…KCVK), 394 to 437 (AHDR…PDVQ), and 439 to 456 (RCVI…IFAA).

Belongs to the WD repeat LIS1/nudF family. In terms of assembly, self-associates. Interacts with NDL1 and dynein.

It localises to the cytoplasm. The protein localises to the cytoskeleton. Its subcellular location is the spindle pole. Functionally, positively regulates the activity of the minus-end directed microtubule motor protein dynein. May enhance dynein-mediated microtubule sliding by targeting dynein to the microtubule plus end. Required for nuclear migration during vegetative growth as well as development. Required for retrograde early endosome (EE) transport from the hyphal tip. Required for localization of dynein to the mitotic spindle poles. Recruits additional proteins to the dynein complex at SPBs. The protein is Nuclear distribution protein PAC1 of Ajellomyces capsulatus (strain H143) (Darling's disease fungus).